A 596-amino-acid polypeptide reads, in one-letter code: Neuroepithelial cell-transforming gene 1 protein (596 aa).

Methionine 1 carries the post-translational modification N-acetylmethionine. The disordered stretch occupies residues 1–44; that stretch reads MEPELAAQKQPRPRRRSRRASGLSTEGATGPSADTSGSELDGRC. The necessary for nuclear localization stretch occupies residues 1–74; sequence MEPELAAQKQ…LKRKRREKDD (74 aa). The short motif at 12-19 is the Nuclear localization signal element; that stretch reads RPRRRSRR. Phosphoserine occurs at positions 21 and 32. Residues 22–38 show a composition bias toward polar residues; the sequence is GLSTEGATGPSADTSGS. The short motif at 66–72 is the Nuclear localization signal element; it reads KRKRREK. 3 positions are modified to phosphoserine: serine 100, serine 106, and serine 122. Positions 127–146 are disordered; sequence GDHRSPASAQKFSSRSTVPT. Residues 133-145 are compositionally biased toward polar residues; it reads ASAQKFSSRSTVP. In terms of domain architecture, DH spans 174-356; it reads RRQEAIYEMS…QGVLSDINLK (183 aa). Residues 386–501 enclose the PH domain; sequence VLLCHGELRS…WFNCIRAAIA (116 aa). Serine 508 bears the Phosphoserine mark. A disordered region spans residues 562–596; it reads MAEDSKSLKTHQTQPGIRRARDKALSGGKRKETLV.

As to quaternary structure, interacts with RHOA in its GTP- and GDP-bound states, and with CDC42 in its GTP-bound state. Interacts with the PDZ 1 domain of BAIAP1. Widely expressed.

It localises to the cytoplasm. The protein resides in the nucleus. Acts as a guanine nucleotide exchange factor (GEF) for RhoA GTPase. May be involved in activation of the SAPK/JNK pathway Stimulates genotoxic stress-induced RHOB activity in breast cancer cells leading to their cell death. In Homo sapiens (Human), this protein is Neuroepithelial cell-transforming gene 1 protein (NET1).